A 583-amino-acid chain; its full sequence is Arginine--tRNA ligase (583 aa).

The short motif at 123–133 (PNIAKEMHVGH) is the 'HIGH' region element.

This sequence belongs to the class-I aminoacyl-tRNA synthetase family. As to quaternary structure, monomer.

It localises to the cytoplasm. The enzyme catalyses tRNA(Arg) + L-arginine + ATP = L-arginyl-tRNA(Arg) + AMP + diphosphate. The sequence is that of Arginine--tRNA ligase from Blochmanniella floridana.